A 294-amino-acid polypeptide reads, in one-letter code: Metallophosphoesterase MPPED2 (294 aa).

5 residues coordinate Mn(2+): aspartate 65, histidine 67, aspartate 86, asparagine 117, and histidine 213. 117–118 (NH) contributes to the GMP binding site. Residues 225-226 (KE) and 252-255 (GIHE) contribute to the GMP site. Histidine 254 serves as a coordination point for Mn(2+).

It belongs to the UPF0046 family. As to quaternary structure, homodimer. Mn(2+) is required as a cofactor. Requires Co(2+) as cofactor.

With respect to regulation, inhibited by nmolar levels of AMP and GMP. Displays low metallophosphoesterase activity (in vitro). May play a role in the development of the nervous system. The polypeptide is Metallophosphoesterase MPPED2 (Mpped2) (Mus musculus (Mouse)).